The sequence spans 980 residues: Vacuolar protein sorting-associated protein 11 homolog (980 aa).

Residues 407 to 554 form a CHCR repeat; it reads YKETIGMLEP…GRDLLIHARD (148 aa). The RING-type; atypical zinc-finger motif lies at 803–843; it reads CSACDTPLQLPTVHFLCKHAYHVHCFESYNMDGSDKCPACQ. The segment covering 886-898 has biased composition (basic and acidic residues); that stretch reads TKKTKKSEAKKDP. The interval 886-980 is disordered; sequence TKKTKKSEAK…APAPSTNPFD (95 aa). Polar residues-rich tracts occupy residues 917 to 937 and 947 to 960; these read TTIS…SRQR and TNPF…TRLS.

Belongs to the VPS11 family. As to quaternary structure, probable core component of at least two putative endosomal tethering complexes, the homotypic fusion and vacuole protein sorting (HOPS) complex and the class C core vacuole/endosome tethering (CORVET) complex. Their common core is composed of the class C Vps proteins vps-11, vps-16 and vps-18, which in HOPS further associates with vps-33.1, vps-39 and vps-41 and in CORVET with vps-8 and vps-33.2.

It localises to the late endosome membrane. The protein resides in the lysosome membrane. Its function is as follows. Plays a role in vesicle-mediated protein trafficking to lysosomal compartments including the endocytic membrane transport pathways. Believed to act as a core component of the putative HOPS and CORVET endosomal tethering complexes which are proposed to be involved in the rab-5-to-rab-7 endosome conversion probably implicating sand-1, and via binding SNAREs and SNARE complexes to mediate tethering and docking events during SNARE-mediated membrane fusion. The HOPS complex is proposed to be recruited to Rab7 on the late endosomal membrane and to regulate late endocytic, phagocytic and autophagic traffic towards lysosomes. Within the HOPS complex, contributes to the normal development of gut granules in embryonic and adult intestinal cells. The CORVET complex is proposed to function as a Rab5 effector to mediate early endosome fusion probably in specific endosome subpopulations. Required for fusion of endosomes and autophagosomes with lysosomes. Involved in cargo transport from early to late endosomes and required for the transition from early to late endosomes. Possibly has a role in clearance of apoptotic cells during programmed cell death. In Caenorhabditis elegans, this protein is Vacuolar protein sorting-associated protein 11 homolog.